Reading from the N-terminus, the 294-residue chain is Melanocortin receptor 5 (294 aa).

Residues 1–29 are Extracellular-facing; it reads FLDLQLNATEGNVSGPSVGNTSSPCEDMG. N-linked (GlcNAc...) asparagine glycosylation is found at Asn7, Asn12, and Asn20. Residues 30 to 53 form a helical membrane-spanning segment; it reads IEVEVFLTLGLISLLENILVIGAI. Residues 54–65 are Cytoplasmic-facing; sequence ARNKNLHVPMYF. A helical membrane pass occupies residues 66 to 89; sequence FVCSLAVADMLVSLSNSWETITIY. Residues 90-106 lie on the Extracellular side of the membrane; that stretch reads LIANKHLVLSDTSVRHL. The helical transmembrane segment at 107-130 threads the bilayer; sequence DNVFDSMICISLVASMCSLLAVAV. The Cytoplasmic segment spans residues 131-147; sequence DRYVTIFYALRYQHLMT. The helical transmembrane segment at 148 to 171 threads the bilayer; the sequence is GRRCGAIIAGIWALCTGCGPVFIV. The Extracellular segment spans residues 172-178; that stretch reads YYESTYV. A helical membrane pass occupies residues 179 to 203; that stretch reads VVCLVAMFLTMLLLMASLYAHMFLQ. Residues 204 to 231 are Cytoplasmic-facing; sequence ARAHVRRIAALPGYRSARQRTSMKGAVT. A helical membrane pass occupies residues 232–257; the sequence is LAMLLGVFIVCWAPFFLHLILMISCP. The Extracellular portion of the chain corresponds to 258–265; that stretch reads QNLYCSCF. The helical transmembrane segment at 266 to 289 threads the bilayer; it reads MSHFNMYLILIMCNSVIDPLIYAF. The Cytoplasmic segment spans residues 290-294; that stretch reads RSQEK.

The protein belongs to the G-protein coupled receptor 1 family.

The protein localises to the cell membrane. Receptor for MSH (alpha, beta and gamma) and ACTH. The activity of this receptor is mediated by G proteins which activate adenylate cyclase. This receptor is a possible mediator of the immunomodulation properties of melanocortins. This is Melanocortin receptor 5 (MC5R) from Sus scrofa (Pig).